The chain runs to 255 residues: Small ribosomal subunit protein uS2 (255 aa).

The protein belongs to the universal ribosomal protein uS2 family.

This chain is Small ribosomal subunit protein uS2, found in Streptococcus thermophilus (strain CNRZ 1066).